The chain runs to 674 residues: tRNA 5-methylaminomethyl-2-thiouridine biosynthesis bifunctional protein MnmC (674 aa).

The segment at 1-237 is tRNA (mnm(5)s(2)U34)-methyltransferase; sequence MLTSYQLESP…KREMTVGELN (237 aa). Residues 270 to 674 form an FAD-dependent cmnm(5)s(2)U34 oxidoreductase region; it reads VGAGLAGANT…IRDLKRSQIL (405 aa).

The protein in the N-terminal section; belongs to the methyltransferase superfamily. tRNA (mnm(5)s(2)U34)-methyltransferase family. This sequence in the C-terminal section; belongs to the DAO family. Requires FAD as cofactor.

It is found in the cytoplasm. It catalyses the reaction 5-aminomethyl-2-thiouridine(34) in tRNA + S-adenosyl-L-methionine = 5-methylaminomethyl-2-thiouridine(34) in tRNA + S-adenosyl-L-homocysteine + H(+). Functionally, catalyzes the last two steps in the biosynthesis of 5-methylaminomethyl-2-thiouridine (mnm(5)s(2)U) at the wobble position (U34) in tRNA. Catalyzes the FAD-dependent demodification of cmnm(5)s(2)U34 to nm(5)s(2)U34, followed by the transfer of a methyl group from S-adenosyl-L-methionine to nm(5)s(2)U34, to form mnm(5)s(2)U34. The protein is tRNA 5-methylaminomethyl-2-thiouridine biosynthesis bifunctional protein MnmC of Marinomonas sp. (strain MWYL1).